A 278-amino-acid chain; its full sequence is Large ribosomal subunit protein uL2 (278 aa).

Composition is skewed to basic residues over residues 210–219 (RSRWLGKRPQ) and 252–263 (KKSRGIKTRNSK). The tract at residues 210-278 (RSRWLGKRPQ…LIIRHRKGNK (69 aa)) is disordered.

This sequence belongs to the universal ribosomal protein uL2 family. Part of the 50S ribosomal subunit. Forms a bridge to the 30S subunit in the 70S ribosome.

Functionally, one of the primary rRNA binding proteins. Required for association of the 30S and 50S subunits to form the 70S ribosome, for tRNA binding and peptide bond formation. It has been suggested to have peptidyltransferase activity; this is somewhat controversial. Makes several contacts with the 16S rRNA in the 70S ribosome. In Lactobacillus johnsonii (strain CNCM I-12250 / La1 / NCC 533), this protein is Large ribosomal subunit protein uL2.